Consider the following 639-residue polypeptide: MLMSKAPKLGNLLSKNSIKIVSGSKLRCNLKYINVRYISDTPDKVFTKLSDENDPQRDAFFKYSWGSWMKNDAIEKEKRVTKFSIEGLNDVLNDIYEQTKVEAKVTKEGAIKPPSFNKNLTVSLPHNLTVKNIGVINPNEKVQITSMASIHEGKHHRIYKIDTNLGKSFVLRVPYALENEDTIAQRLKSEVASMDFADLKLGIKVPKTYCFGINGLNPIRQPFILQEYIDGKLLMRDWSPLENDTSDGKPPVALQDVINKLSEFQSKLISMKFNGFGSIYFAKDAEELENVPELYDNETNEELKGRWKLGYSVERCLWKKKSFLPTDKLKTFLGPWSINKPTDIIRATGLLEAENAKVRLGLKEADSSSEAVESGVLKSQVATFENLVKLAPSLINSETKSIPNISDLLLPRLKHPDLDPMNVLVTENNEVYLLDFEGSSIKPLILQNAPQFVAYDGPKVYNIEKEVPDYEKLSDSEKAQYEFMYKRTRNQFLWEMAFNKTNPEFISIVAPPVKLLRSPYIAAIERKTDEEYILVDEAMIQLKEIWDIFTKNGLVKNSPYPIEYTTEQLEQHGKDLLKFHEKLISQPFAATQGWIPQDMFENLVAGGVLVKNKSGDYEVSSEAQSEVQSEVQSSTENKD.

The N-terminal 45 residues, 1–45 (MLMSKAPKLGNLLSKNSIKIVSGSKLRCNLKYINVRYISDTPDKV), are a transit peptide targeting the mitochondrion. The interval 619-639 (VSSEAQSEVQSEVQSSTENKD) is disordered.

The protein belongs to the AIM9 family.

It localises to the mitochondrion. The chain is Altered inheritance of mitochondria protein 9, mitochondrial (AIM9) from Vanderwaltozyma polyspora (strain ATCC 22028 / DSM 70294 / BCRC 21397 / CBS 2163 / NBRC 10782 / NRRL Y-8283 / UCD 57-17) (Kluyveromyces polysporus).